Consider the following 201-residue polypeptide: Large ribosomal subunit protein bL25 (201 aa).

The protein belongs to the bacterial ribosomal protein bL25 family. CTC subfamily. As to quaternary structure, part of the 50S ribosomal subunit; part of the 5S rRNA/L5/L18/L25 subcomplex. Contacts the 5S rRNA. Binds to the 5S rRNA independently of L5 and L18.

Its function is as follows. This is one of the proteins that binds to the 5S RNA in the ribosome where it forms part of the central protuberance. In Burkholderia lata (strain ATCC 17760 / DSM 23089 / LMG 22485 / NCIMB 9086 / R18194 / 383), this protein is Large ribosomal subunit protein bL25.